We begin with the raw amino-acid sequence, 1523 residues long: Lysophospholipase nte1 (1523 aa).

Residues 1 to 66 (MADGVTLVDS…LPPVPTTMAG (66 aa)) lie on the Cytoplasmic side of the membrane. The helical transmembrane segment at 67 to 87 (WIGWVFSFFFQVIPSVLYWVI) threads the bilayer. The Lumenal segment spans residues 88 to 109 (TFSTITLPTWLFTLFSMSLTFT). A helical membrane pass occupies residues 110 to 130 (MNFTTLLLIVLAMVSTISWFI). Residues 131 to 1523 (RYRFLNMYSR…RTMAPRRASI (1393 aa)) lie on the Cytoplasmic side of the membrane. 2 disordered regions span residues 309-384 (VPNS…KSVH) and 524-545 (RAAT…GVSP). Residues 370-382 (ESRKHSSRKRRKS) show a composition bias toward basic residues. A nucleoside 3',5'-cyclic phosphate-binding positions include 681–800 (GGTS…GAVA) and 841–961 (RLTS…IAQR). Residues 1220-1384 (LVLGGGGARG…IDNLTVDHMK (165 aa)) form the PNPLA domain. Residues 1224–1229 (GGGARG) carry the GXGXXG motif. Residues 1251 to 1255 (GTSIG) carry the GXSXG motif. Catalysis depends on S1253, which acts as the Nucleophile. The Proton acceptor role is filled by D1371. Positions 1371–1373 (DGG) match the DGA/G motif. A disordered region spans residues 1502–1523 (LPEETEEKKKLQRTMAPRRASI).

It belongs to the NTE family.

The protein localises to the endoplasmic reticulum membrane. It carries out the reaction a 1-acyl-sn-glycero-3-phosphocholine + H2O = sn-glycerol 3-phosphocholine + a fatty acid + H(+). Its activity is regulated as follows. Inhibited by organophosphorus esters. In terms of biological role, intracellular phospholipase B that catalyzes the double deacylation of phosphatidylcholine (PC) to glycerophosphocholine (GroPCho). Plays an important role in membrane lipid homeostasis. Responsible for the rapid PC turnover in response to inositol, elevated temperatures, or when choline is present in the growth medium. This is Lysophospholipase nte1 (nte1) from Neosartorya fischeri (strain ATCC 1020 / DSM 3700 / CBS 544.65 / FGSC A1164 / JCM 1740 / NRRL 181 / WB 181) (Aspergillus fischerianus).